We begin with the raw amino-acid sequence, 470 residues long: ADAM DEC1 (470 aa).

An N-terminal signal peptide occupies residues 1 to 30; sequence MLRGISQLPAVATMSWVLLPVLWLIVQTQA. The propeptide occupies 31–205; the sequence is IAIKQTPELT…QGPIRISRSL (175 aa). Asparagine 61 is a glycosylation site (N-linked (GlcNAc...) asparagine). Residues 173-200 form a disordered region; sequence FTSNQEEQDPANHTCGVKSTDGKQGPIR. Asparagine 184 is a glycosylation site (N-linked (GlcNAc...) (complex) asparagine). The region spanning 218 to 412 is the Peptidase M12B domain; the sequence is KYIDLYLVLD…QKPKCLLQAP (195 aa). Residue asparagine 237 is glycosylated (N-linked (GlcNAc...) asparagine). 2 disulfides stabilise this stretch: cysteine 328/cysteine 407 and cysteine 369/cysteine 374. Histidine 352 contacts Zn(2+). Glutamate 353 is an active-site residue. Positions 356 and 362 each coordinate Zn(2+). The 51-residue stretch at 420 to 470 folds into the Disintegrin domain; the sequence is TPVCGNHLLEVGEDCDCGSPKECTNLCCEALTCKLKPGTDCGGDAPNHTTE. N-linked (GlcNAc...) asparagine glycosylation is present at asparagine 466.

Requires Zn(2+) as cofactor. In terms of tissue distribution, expressed highly in the small intestine and appendix, moderately in lymph node, mucosal lining of the colon, thymus, spleen and very weakly in the bone marrow. Predominantly expressed in dendritic cells (DC) of the germinal center. Weakly expressed in monocyte and highly expressed in macrophage. Absent in immature DC.

The protein localises to the secreted. Its function is as follows. May play an important role in the control of the immune response and during pregnancy. The protein is ADAM DEC1 (ADAMDEC1) of Homo sapiens (Human).